The following is a 378-amino-acid chain: Mannitol-1-phosphate 5-dehydrogenase (378 aa).

4 to 15 (SVHFGAGNIGRG) provides a ligand contact to NAD(+).

It belongs to the mannitol dehydrogenase family.

The enzyme catalyses D-mannitol 1-phosphate + NAD(+) = beta-D-fructose 6-phosphate + NADH + H(+). This Streptococcus pneumoniae (strain JJA) protein is Mannitol-1-phosphate 5-dehydrogenase.